We begin with the raw amino-acid sequence, 252 residues long: MERLLIVNADDFGLSKGQNYGIIEACRNGIVTSTTALVNGQAIDHAVQLSRDEPSLAIGMHFVLTMGKPLTAMPGLTRDGVLGKWIWQLAEEDALPLEEITQELASQYLRFIELFGRKPTHLDSHHHVHMFPQIFPIVVRFAAEEGIALRIDRQPLSNSGDLPANLRSSQGFSSAFYGEEISEALFLQVLDDASHRGDLSLEVMCHPAFIDNTIRQSAYCFPRLTELEVLTSASLKYAIAERGYRLGSYLNV.

Residues His-61 and His-125 each coordinate Mg(2+).

This sequence belongs to the YdjC deacetylase family. ChbG subfamily. Homodimer. It depends on Mg(2+) as a cofactor.

The protein localises to the cytoplasm. It catalyses the reaction N,N'-diacetylchitobiose + H2O = N-acetyl-beta-D-glucosaminyl-(1-&gt;4)-D-glucosamine + acetate. The enzyme catalyses diacetylchitobiose-6'-phosphate + H2O = N'-monoacetylchitobiose-6'-phosphate + acetate. The protein operates within glycan degradation; chitin degradation. Involved in the degradation of chitin. ChbG is essential for growth on the acetylated chitooligosaccharides chitobiose and chitotriose but is dispensable for growth on cellobiose and chitosan dimer, the deacetylated form of chitobiose. Deacetylation of chitobiose-6-P and chitotriose-6-P is necessary for both the activation of the chb promoter by the regulatory protein ChbR and the hydrolysis of phosphorylated beta-glucosides by the phospho-beta-glucosidase ChbF. Catalyzes the removal of only one acetyl group from chitobiose-6-P to yield monoacetylchitobiose-6-P, the inducer of ChbR and the substrate of ChbF. This is Chitooligosaccharide deacetylase from Escherichia coli O8 (strain IAI1).